A 66-amino-acid polypeptide reads, in one-letter code: Protein translocase subunit SecE (66 aa).

Residues 29–49 (LVASTLVVVVAVFIFSPICLV) form a helical membrane-spanning segment.

The protein belongs to the SecE/SEC61-gamma family. Component of the Sec protein translocase complex. Heterotrimer consisting of SecY, SecE and SecG subunits. The heterotrimers can form oligomers, although 1 heterotrimer is thought to be able to translocate proteins. Interacts with the ribosome. Interacts with SecDF, and other proteins may be involved. Interacts with SecA.

Its subcellular location is the cell inner membrane. In terms of biological role, essential subunit of the Sec protein translocation channel SecYEG. Clamps together the 2 halves of SecY. May contact the channel plug during translocation. The chain is Protein translocase subunit SecE from Rickettsia montanensis.